Consider the following 553-residue polypeptide: Hydroxylamine reductase (553 aa).

Cys3, Cys6, Cys18, and Cys25 together coordinate [2Fe-2S] cluster. Hybrid [4Fe-2O-2S] cluster is bound by residues His252, Glu276, Cys320, Cys408, Cys436, Cys461, Glu495, and Lys497. Cys408 carries the post-translational modification Cysteine persulfide.

This sequence belongs to the HCP family. Requires [2Fe-2S] cluster as cofactor. The cofactor is hybrid [4Fe-2O-2S] cluster.

It localises to the cytoplasm. It carries out the reaction A + NH4(+) + H2O = hydroxylamine + AH2 + H(+). Its function is as follows. Catalyzes the reduction of hydroxylamine to form NH(3) and H(2)O. The sequence is that of Hydroxylamine reductase from Tolumonas auensis (strain DSM 9187 / NBRC 110442 / TA 4).